A 324-amino-acid polypeptide reads, in one-letter code: Glyoxylate/hydroxypyruvate reductase B (324 aa).

Active-site residues include R237 and E266. H285 functions as the Proton donor in the catalytic mechanism.

Belongs to the D-isomer specific 2-hydroxyacid dehydrogenase family. GhrB subfamily. As to quaternary structure, homodimer.

It localises to the cytoplasm. The catalysed reaction is glycolate + NADP(+) = glyoxylate + NADPH + H(+). The enzyme catalyses (R)-glycerate + NAD(+) = 3-hydroxypyruvate + NADH + H(+). It catalyses the reaction (R)-glycerate + NADP(+) = 3-hydroxypyruvate + NADPH + H(+). In terms of biological role, catalyzes the NADPH-dependent reduction of glyoxylate and hydroxypyruvate into glycolate and glycerate, respectively. The chain is Glyoxylate/hydroxypyruvate reductase B from Salmonella heidelberg (strain SL476).